The sequence spans 409 residues: Elongation factor Tu (409 aa).

Residues 10–214 enclose the tr-type G domain; that stretch reads KPHVNIGTIG…EVDAYIPTPE (205 aa). Positions 19 to 26 are G1; sequence GHVDHGKT. 19-26 is a binding site for GTP; the sequence is GHVDHGKT. Thr-26 is a binding site for Mg(2+). The G2 stretch occupies residues 60–64; the sequence is GITIN. A G3 region spans residues 81–84; the sequence is DCPG. GTP is bound by residues 81–85 and 136–139; these read DCPGH and NKQD. The interval 136 to 139 is G4; it reads NKQD. The G5 stretch occupies residues 174–176; the sequence is SAL.

Belongs to the TRAFAC class translation factor GTPase superfamily. Classic translation factor GTPase family. EF-Tu/EF-1A subfamily. In terms of assembly, monomer.

Its subcellular location is the cytoplasm. The enzyme catalyses GTP + H2O = GDP + phosphate + H(+). In terms of biological role, GTP hydrolase that promotes the GTP-dependent binding of aminoacyl-tRNA to the A-site of ribosomes during protein biosynthesis. In Acaryochloris marina (strain MBIC 11017), this protein is Elongation factor Tu.